Reading from the N-terminus, the 245-residue chain is Increased recombination centers protein 22 (245 aa).

The N-terminal stretch at 1–20 (MKFLHIGLMTLMAGVSNVLA) is a signal peptide. At 21–188 (QEEANAEDVM…TFKLDLINQS (168 aa)) the chain is on the lumenal side. Residues 189–209 (ISIFDPSFLSIIAVLIALVGG) traverse the membrane as a helical segment. At 210–245 (TVYLYSNVVAPPKKIKKKEAIPAKIDESWLPDVHKK) the chain is on the cytoplasmic side.

It belongs to the IRC22 family.

The protein localises to the endoplasmic reticulum membrane. Its function is as follows. Is probably involved in a pathway contributing to genomic integrity. In Candida glabrata (strain ATCC 2001 / BCRC 20586 / JCM 3761 / NBRC 0622 / NRRL Y-65 / CBS 138) (Yeast), this protein is Increased recombination centers protein 22 (IRC22).